A 195-amino-acid chain; its full sequence is Imidazoleglycerol-phosphate dehydratase (195 aa).

It belongs to the imidazoleglycerol-phosphate dehydratase family.

Its subcellular location is the cytoplasm. The catalysed reaction is D-erythro-1-(imidazol-4-yl)glycerol 3-phosphate = 3-(imidazol-4-yl)-2-oxopropyl phosphate + H2O. It functions in the pathway amino-acid biosynthesis; L-histidine biosynthesis; L-histidine from 5-phospho-alpha-D-ribose 1-diphosphate: step 6/9. This is Imidazoleglycerol-phosphate dehydratase from Shouchella clausii (strain KSM-K16) (Alkalihalobacillus clausii).